The following is a 148-amino-acid chain: Arginine repressor (148 aa).

This sequence belongs to the ArgR family.

It localises to the cytoplasm. It functions in the pathway amino-acid biosynthesis; L-arginine biosynthesis [regulation]. Regulates arginine biosynthesis genes. The protein is Arginine repressor of Pelodictyon phaeoclathratiforme (strain DSM 5477 / BU-1).